We begin with the raw amino-acid sequence, 181 residues long: Shikimate kinase 2 (181 aa).

Residue 12 to 17 (GCGKTT) participates in ATP binding. Mg(2+)-binding residues include threonine 16 and aspartate 32. Substrate contacts are provided by aspartate 34, arginine 58, and glycine 79. An LID domain region spans residues 112–126 (EAEPEAELRPTLTGK). Arginine 120 contacts ATP. Residue arginine 139 coordinates substrate.

The protein belongs to the shikimate kinase family. AroL subfamily. In terms of assembly, monomer. Requires Mg(2+) as cofactor.

It localises to the cytoplasm. It carries out the reaction shikimate + ATP = 3-phosphoshikimate + ADP + H(+). It functions in the pathway metabolic intermediate biosynthesis; chorismate biosynthesis; chorismate from D-erythrose 4-phosphate and phosphoenolpyruvate: step 5/7. Catalyzes the specific phosphorylation of the 3-hydroxyl group of shikimic acid using ATP as a cosubstrate. In Salmonella schwarzengrund (strain CVM19633), this protein is Shikimate kinase 2.